The chain runs to 179 residues: Large ribosomal subunit protein uL6 (179 aa).

It belongs to the universal ribosomal protein uL6 family. As to quaternary structure, part of the 50S ribosomal subunit.

Its function is as follows. This protein binds to the 23S rRNA, and is important in its secondary structure. It is located near the subunit interface in the base of the L7/L12 stalk, and near the tRNA binding site of the peptidyltransferase center. The polypeptide is Large ribosomal subunit protein uL6 (Rhodococcus opacus (strain B4)).